Here is a 300-residue protein sequence, read N- to C-terminus: Dioxygenase FUM3 (300 aa).

Fe cation-binding residues include His-146, Asp-148, and His-222.

Belongs to the PhyH family. In terms of assembly, homodimer. The cofactor is Fe cation.

The protein operates within mycotoxin biosynthesis. Dioxygenase; part of the gene cluster that mediates the biosynthesis of fumonisins B1 (FB1), B2 (FB2), B3 (FB3), and B4 (FB4), which are carcinogenic mycotoxins. Within the pathway, FUM3 performs the C-5 hydroxylation present in FB1 and FB2 and which occurs late in the biosynthesis. The biosynthesis starts with the FUM1-catalyzed carbon chain assembly from one molecule of acetyl-CoA, eight molecules of malonyl-CoA, and two molecules of methionine (in S-adenosyl form). The C18 polyketide chain is released from the enzyme by a nucleophilic attack of a carbanion, which is derived from R-carbon of alanine by decarboxylation, on the carbonyl carbon of polyketide acyl chain. This step is catalyzed by the pyridoxal 5'-phosphate-dependent aminoacyl transferase FUM8. The resultant 3-keto intermediate is then stereospecifically reduced to a 3-hydroxyl product by reductase FUM13. Subsequent oxidations at C-10 by the cytochrome P450 monooxygenase FUM2, C-14 and C-15 by FUM6, FUM12 or FUM15, tricarballylic esterification of the hydroxyl groups on C-14 and C-15 by acyltransferase FUM14, and C-5 hydroxylation by 2-keto-glutarate-dependent dioxygenase FUM3 furnish the biosynthesis of fumonisins. The tricarballylic moieties are most likely derived from the citric acid cycle, and their addition to the carbon backbone may involve FUM7, FUM10, FUM11 and FUM14. The protein is Dioxygenase FUM3 of Gibberella moniliformis (strain M3125 / FGSC 7600) (Maize ear and stalk rot fungus).